A 159-amino-acid polypeptide reads, in one-letter code: Peptide deformylase (159 aa).

2 residues coordinate Fe cation: C88 and H130. The active site involves E131. A Fe cation-binding site is contributed by H134.

Belongs to the polypeptide deformylase family. It depends on Fe(2+) as a cofactor.

It catalyses the reaction N-terminal N-formyl-L-methionyl-[peptide] + H2O = N-terminal L-methionyl-[peptide] + formate. Functionally, removes the formyl group from the N-terminal Met of newly synthesized proteins. Requires at least a dipeptide for an efficient rate of reaction. N-terminal L-methionine is a prerequisite for activity but the enzyme has broad specificity at other positions. This chain is Peptide deformylase, found in Caldanaerobacter subterraneus subsp. tengcongensis (strain DSM 15242 / JCM 11007 / NBRC 100824 / MB4) (Thermoanaerobacter tengcongensis).